A 375-amino-acid polypeptide reads, in one-letter code: Alanine racemase (375 aa).

The active-site Proton acceptor; specific for D-alanine is Lys41. Lys41 is subject to N6-(pyridoxal phosphate)lysine. Residue Arg141 participates in substrate binding. Tyr270 (proton acceptor; specific for L-alanine) is an active-site residue. Met317 serves as a coordination point for substrate.

This sequence belongs to the alanine racemase family. The cofactor is pyridoxal 5'-phosphate.

It carries out the reaction L-alanine = D-alanine. It participates in amino-acid biosynthesis; D-alanine biosynthesis; D-alanine from L-alanine: step 1/1. In terms of biological role, catalyzes the interconversion of L-alanine and D-alanine. May also act on other amino acids. The polypeptide is Alanine racemase (alr) (Lactiplantibacillus plantarum (strain ATCC BAA-793 / NCIMB 8826 / WCFS1) (Lactobacillus plantarum)).